Consider the following 536-residue polypeptide: ATP synthase subunit alpha, mitochondrial (536 aa).

A mitochondrion-targeting transit peptide spans 1-27 (MLRQAGTRLLKVPVCGLRPSITLKRGY). ATP is bound at residue 197–204 (GDRQTGKT).

This sequence belongs to the ATPase alpha/beta chains family. In terms of assembly, F-type ATPases have 2 components, CF(1) - the catalytic core - and CF(0) - the membrane proton channel. CF(1) has five subunits: alpha(3), beta(3), gamma(1), delta(1), epsilon(1). CF(0) has three main subunits: a, b and c.

It localises to the mitochondrion. It is found in the mitochondrion inner membrane. Mitochondrial membrane ATP synthase (F(1)F(0) ATP synthase or Complex V) produces ATP from ADP in the presence of a proton gradient across the membrane which is generated by electron transport complexes of the respiratory chain. F-type ATPases consist of two structural domains, F(1) - containing the extramembraneous catalytic core, and F(0) - containing the membrane proton channel, linked together by a central stalk and a peripheral stalk. During catalysis, ATP synthesis in the catalytic domain of F(1) is coupled via a rotary mechanism of the central stalk subunits to proton translocation. Subunits alpha and beta form the catalytic core in F(1). Rotation of the central stalk against the surrounding alpha(3)beta(3) subunits leads to hydrolysis of ATP in three separate catalytic sites on the beta subunits. Subunit alpha does not bear the catalytic high-affinity ATP-binding sites. The chain is ATP synthase subunit alpha, mitochondrial (atp1) from Schizosaccharomyces pombe (strain 972 / ATCC 24843) (Fission yeast).